Reading from the N-terminus, the 391-residue chain is Phosphoglycerate kinase (391 aa).

Residues 21-23 (DLN), Arg36, 59-62 (HLGR), Arg113, and Arg146 contribute to the substrate site. ATP-binding positions include Lys197, Glu319, and 345–348 (GGDT).

It belongs to the phosphoglycerate kinase family. Monomer.

It localises to the cytoplasm. The enzyme catalyses (2R)-3-phosphoglycerate + ATP = (2R)-3-phospho-glyceroyl phosphate + ADP. It functions in the pathway carbohydrate degradation; glycolysis; pyruvate from D-glyceraldehyde 3-phosphate: step 2/5. The polypeptide is Phosphoglycerate kinase (Shewanella sp. (strain MR-4)).